The sequence spans 316 residues: ATP synthase gamma chain (316 aa).

This sequence belongs to the ATPase gamma chain family. As to quaternary structure, F-type ATPases have 2 components, CF(1) - the catalytic core - and CF(0) - the membrane proton channel. CF(1) has five subunits: alpha(3), beta(3), gamma(1), delta(1), epsilon(1). CF(0) has three main subunits: a, b and c.

Its subcellular location is the cellular thylakoid membrane. In terms of biological role, produces ATP from ADP in the presence of a proton gradient across the membrane. The gamma chain is believed to be important in regulating ATPase activity and the flow of protons through the CF(0) complex. The protein is ATP synthase gamma chain of Prochlorococcus marinus (strain MIT 9215).